Consider the following 134-residue polypeptide: Large ribosomal subunit protein uL16c (134 aa).

Residues 1 to 22 are disordered; that stretch reads MLSPKRTRFRKQHRGRMKGISH.

Belongs to the universal ribosomal protein uL16 family. In terms of assembly, part of the 50S ribosomal subunit.

It is found in the plastid. The protein resides in the chloroplast. In Nicotiana tomentosiformis (Tobacco), this protein is Large ribosomal subunit protein uL16c.